The chain runs to 223 residues: Expansin-B6 (223 aa).

The Expansin-like EG45 domain occupies 16–124 (GGACGFAVAN…RRVECLYRRT (109 aa)). 3 disulfides stabilise this stretch: Cys19-Cys46, Cys49-Cys119, and Cys54-Cys60. One can recognise an Expansin-like CBD domain in the interval 137 to 218 (YYISFVVEYE…NWKPNETYRS (82 aa)). N-linked (GlcNAc...) asparagine glycosylation occurs at Asn213.

The protein belongs to the expansin family. Expansin B subfamily.

It is found in the secreted. It localises to the cell wall. The protein localises to the membrane. Its function is as follows. May cause loosening and extension of plant cell walls by disrupting non-covalent bonding between cellulose microfibrils and matrix glucans. This is Expansin-B6 from Arabidopsis thaliana (Mouse-ear cress).